Consider the following 385-residue polypeptide: Carbamoyl phosphate synthase small chain (385 aa).

The interval 1–185 is CPSase; sequence MSEPAILVLA…LGKGFIEQTQ (185 aa). Serine 47, glycine 237, and glycine 239 together coordinate L-glutamine. One can recognise a Glutamine amidotransferase type-1 domain in the interval 189 to 376; the sequence is NVVAYDFGVK…INEMRKANLS (188 aa). Cysteine 265 functions as the Nucleophile in the catalytic mechanism. The L-glutamine site is built by leucine 266, glutamine 269, asparagine 307, glycine 309, and phenylalanine 310. Active-site residues include histidine 349 and glutamate 351.

It belongs to the CarA family. Composed of two chains; the small (or glutamine) chain promotes the hydrolysis of glutamine to ammonia, which is used by the large (or ammonia) chain to synthesize carbamoyl phosphate. Tetramer of heterodimers (alpha,beta)4.

It catalyses the reaction hydrogencarbonate + L-glutamine + 2 ATP + H2O = carbamoyl phosphate + L-glutamate + 2 ADP + phosphate + 2 H(+). It carries out the reaction L-glutamine + H2O = L-glutamate + NH4(+). It functions in the pathway amino-acid biosynthesis; L-arginine biosynthesis; carbamoyl phosphate from bicarbonate: step 1/1. Its pathway is pyrimidine metabolism; UMP biosynthesis via de novo pathway; (S)-dihydroorotate from bicarbonate: step 1/3. Its function is as follows. Small subunit of the glutamine-dependent carbamoyl phosphate synthetase (CPSase). CPSase catalyzes the formation of carbamoyl phosphate from the ammonia moiety of glutamine, carbonate, and phosphate donated by ATP, constituting the first step of 2 biosynthetic pathways, one leading to arginine and/or urea and the other to pyrimidine nucleotides. The small subunit (glutamine amidotransferase) binds and cleaves glutamine to supply the large subunit with the substrate ammonia. This is Carbamoyl phosphate synthase small chain from Pasteurella multocida (strain Pm70).